Consider the following 716-residue polypeptide: Translation initiation factor IF-2 (716 aa).

Positions 53-135 (GGAGVTSQKP…PLKPKKELPE (83 aa)) are disordered. Residues 57–83 (VTSQKPAETNKNKPQGINQQPAGNQPN) show a composition bias toward polar residues. Over residues 93 to 109 (VQNNQFNKNKKNNNNNK) the composition is skewed to low complexity. The 170-residue stretch at 217-386 (IRPPVVTIMG…LLVSEVEELK (170 aa)) folds into the tr-type G domain. Positions 226–233 (GHVDHGKT) are G1. 226–233 (GHVDHGKT) provides a ligand contact to GTP. Residues 251-255 (GITQH) are G2. Residues 272 to 275 (DTPG) form a G3 region. GTP contacts are provided by residues 272-276 (DTPGH) and 326-329 (NKVD). The interval 326-329 (NKVD) is G4. The segment at 362–364 (SAL) is G5.

Belongs to the TRAFAC class translation factor GTPase superfamily. Classic translation factor GTPase family. IF-2 subfamily.

The protein localises to the cytoplasm. Functionally, one of the essential components for the initiation of protein synthesis. Protects formylmethionyl-tRNA from spontaneous hydrolysis and promotes its binding to the 30S ribosomal subunits. Also involved in the hydrolysis of GTP during the formation of the 70S ribosomal complex. In Bacillus velezensis (strain DSM 23117 / BGSC 10A6 / LMG 26770 / FZB42) (Bacillus amyloliquefaciens subsp. plantarum), this protein is Translation initiation factor IF-2.